The chain runs to 165 residues: Protein SprT (165 aa).

The 144-residue stretch at 20–163 (EKLAQANLKL…RCVHCGEQLV (144 aa)) folds into the SprT-like domain. His-78 contacts Zn(2+). Residue Glu-79 is part of the active site. His-82 serves as a coordination point for Zn(2+).

It belongs to the SprT family. Requires Zn(2+) as cofactor.

It is found in the cytoplasm. The chain is Protein SprT from Escherichia coli O127:H6 (strain E2348/69 / EPEC).